Here is a 236-residue protein sequence, read N- to C-terminus: tRNA1(Val) (adenine(37)-N6)-methyltransferase (236 aa).

Belongs to the methyltransferase superfamily. tRNA (adenine-N(6)-)-methyltransferase family.

It is found in the cytoplasm. It carries out the reaction adenosine(37) in tRNA1(Val) + S-adenosyl-L-methionine = N(6)-methyladenosine(37) in tRNA1(Val) + S-adenosyl-L-homocysteine + H(+). In terms of biological role, specifically methylates the adenine in position 37 of tRNA(1)(Val) (anticodon cmo5UAC). The protein is tRNA1(Val) (adenine(37)-N6)-methyltransferase of Actinobacillus pleuropneumoniae serotype 7 (strain AP76).